An 844-amino-acid polypeptide reads, in one-letter code: Proto-oncogene vav (844 aa).

A Calponin-homology (CH) domain is found at 1–119 (MELWRQCTHW…YTLSALSWTP (119 aa)). Positions 193 to 372 (KRCCCLREIQ…RDLAQCVNEV (180 aa)) constitute a DH domain. In terms of domain architecture, PH spans 401 to 503 (RPKIDGELKI…WMEQFEMAIS (103 aa)). The Phorbol-ester/DAG-type zinc finger occupies 514–563 (GHDFQMFSFEETTSCKACQMLLRGTFYQGYRCQRCRAPAHKECLGRVPPC). Residues 567–589 (GQDYSGTMKKDKPHRRAQDKKRN) are disordered. Positions 591 to 659 (LGLPKMEVCQ…PCNRVKPYVH (69 aa)) constitute an SH3 1 domain. One can recognise an SH2 domain in the interval 670–764 (WYAGPMERAG…SLDTTLQFPF (95 aa)). The SH3 2 domain maps to 781–841 (KIFGTAKARY…PSNYVEEDYS (61 aa)). 2 positions are modified to phosphotyrosine: tyrosine 825 and tyrosine 843.

In terms of assembly, interacts with SHB. Interacts with APS, DOCK2, GRB2, GRB3, DOCK2, SLA, TEC and ZNF655/VIK. Interacts with SIAH2; without leading to its degradation. Associates with BLNK, PLCG1, GRB2 and NCK1 in a B-cell antigen receptor-dependent fashion. Interacts with CBLB; which inhibits tyrosine phosphorylation and down-regulates activity. May interact with CCPG1. Interacts with CLNK. Interacts with THEMIS2. Interacts with NEK3 and this interaction is prolactin-dependent. Interacts with ITK. Interacts with PTK2B/PYK2. Interacts with HCK. Interacts with PTK2B/PYK2. Interacts (via SH2 domain) with SYK. Interacts with ANKRD54. Interacts with CD6. Interacts with LCP2; this interaction plays a role in TCR-mediated cytokine production. Post-translationally, phosphorylated by FYN. Phosphorylated on tyrosine residues by HCK in response to IFNG and bacterial lipopolysaccharide (LPS).

Its function is as follows. Couples tyrosine kinase signals with the activation of the Rho/Rac GTPases, thus leading to cell differentiation and/or proliferation. The polypeptide is Proto-oncogene vav (VAV1) (Bos taurus (Bovine)).